A 275-amino-acid polypeptide reads, in one-letter code: Large ribosomal subunit protein uL2c (275 aa).

2 disordered regions span residues 32–53 and 218–242; these read SLSK…TCRH and PTVR…APIG.

It belongs to the universal ribosomal protein uL2 family. In terms of assembly, part of the 50S ribosomal subunit.

The protein localises to the plastid. Its subcellular location is the chloroplast. The polypeptide is Large ribosomal subunit protein uL2c (rpl2) (Tetradesmus obliquus (Green alga)).